We begin with the raw amino-acid sequence, 288 residues long: Acetyl-coenzyme A carboxylase carboxyl transferase subunit beta (288 aa).

Positions 30–288 (IMTKCPKCKK…KMHQEVKTNA (259 aa)) constitute a CoA carboxyltransferase N-terminal domain. Zn(2+) is bound by residues C34, C37, C53, and C56. Residues 34-56 (CPKCKKIMYTKELAENLNVCFNC) form a C4-type zinc finger.

It belongs to the AccD/PCCB family. In terms of assembly, acetyl-CoA carboxylase is a heterohexamer composed of biotin carboxyl carrier protein (AccB), biotin carboxylase (AccC) and two subunits each of ACCase subunit alpha (AccA) and ACCase subunit beta (AccD). Requires Zn(2+) as cofactor.

The protein localises to the cytoplasm. It carries out the reaction N(6)-carboxybiotinyl-L-lysyl-[protein] + acetyl-CoA = N(6)-biotinyl-L-lysyl-[protein] + malonyl-CoA. Its pathway is lipid metabolism; malonyl-CoA biosynthesis; malonyl-CoA from acetyl-CoA: step 1/1. Its function is as follows. Component of the acetyl coenzyme A carboxylase (ACC) complex. Biotin carboxylase (BC) catalyzes the carboxylation of biotin on its carrier protein (BCCP) and then the CO(2) group is transferred by the transcarboxylase to acetyl-CoA to form malonyl-CoA. This Staphylococcus saprophyticus subsp. saprophyticus (strain ATCC 15305 / DSM 20229 / NCIMB 8711 / NCTC 7292 / S-41) protein is Acetyl-coenzyme A carboxylase carboxyl transferase subunit beta.